Reading from the N-terminus, the 285-residue chain is MPLVSMTEMLNTAKEKGYAVGQFNLNNLEFTQAILQAAEEEKSPVILGVSEGAGRYMGGFKTVVAMVKALMEEYKVTVPVAIHLDHGSSFESCAKAIHAGFTSVMIDASHHPFEENVATTAKVVELAHFHGVSVEAELGTVGGQEDDVIAEGVIYADPKECQELVERTGIDCLAPALGSVHGPYKGEPNLGFKEMEEIGKSTGLPLVLHGGTGIPTADIKKSISLGTAKINVNTENQISSAKAVRETLAAKPDEYDPRKYLGPAREAIKETVIGKMREFGSSNQA.

Serine 50 is a D-glyceraldehyde 3-phosphate binding site. The Proton donor role is filled by aspartate 85. Zn(2+) contacts are provided by histidine 86, aspartate 107, glutamate 137, and histidine 181. Glycine 182 is a binding site for dihydroxyacetone phosphate. Histidine 209 is a binding site for Zn(2+). Dihydroxyacetone phosphate-binding positions include glycine 210–threonine 212 and asparagine 231–threonine 234. Threonine 212 and threonine 234 each carry phosphothreonine.

This sequence belongs to the class II fructose-bisphosphate aldolase family. Zn(2+) is required as a cofactor. Phosphorylated during sporulation.

The enzyme catalyses beta-D-fructose 1,6-bisphosphate = D-glyceraldehyde 3-phosphate + dihydroxyacetone phosphate. The protein operates within carbohydrate degradation; glycolysis; D-glyceraldehyde 3-phosphate and glycerone phosphate from D-glucose: step 4/4. Catalyzes the aldol condensation of dihydroxyacetone phosphate (DHAP or glycerone-phosphate) with glyceraldehyde 3-phosphate (G3P) to form fructose 1,6-bisphosphate (FBP) in gluconeogenesis and the reverse reaction in glycolysis. In Bacillus subtilis (strain 168), this protein is Probable fructose-bisphosphate aldolase (fbaA).